The primary structure comprises 615 residues: UvrABC system protein C (615 aa).

One can recognise a GIY-YIG domain in the interval 14 to 91 (TSPGCYIHKD…IKENKPKYNI (78 aa)). Positions 196–231 (NKIIDELKGKMAAAAQTMEFERAAEYRDLIQAIGTL) constitute a UVR domain.

Belongs to the UvrC family. As to quaternary structure, interacts with UvrB in an incision complex.

Its subcellular location is the cytoplasm. The UvrABC repair system catalyzes the recognition and processing of DNA lesions. UvrC both incises the 5' and 3' sides of the lesion. The N-terminal half is responsible for the 3' incision and the C-terminal half is responsible for the 5' incision. In Streptococcus pneumoniae (strain ATCC 700669 / Spain 23F-1), this protein is UvrABC system protein C.